Reading from the N-terminus, the 541-residue chain is Transcription factor STP2 (541 aa).

Positions Val-13–Asn-32 are i. The disordered stretch occupies residues Asp-35–Asp-58. The segment at Leu-73 to Ser-105 is II. A C2H2-type 1 zinc finger spans residues Tyr-204–His-226. The C2H2-type 2; atypical zinc finger occupies Tyr-232–His-267. The C2H2-type 3; atypical zinc finger occupies Gly-284 to Cys-309. Low complexity predominate over residues Ser-452–Ser-462. Residues Ser-452–Ser-497 form a disordered region. Positions Pro-465–Ser-482 are enriched in polar residues.

In terms of assembly, interacts (via Region II) with SSY5; protease component of the SPS-sensor. Activated by the amino acid-induced proteolytic removal of an N-terminal inhibitory domain by serine protease SSY5, an intrinsic component of the SPS-sensor. Processing requires at least 2 components of the SCF(GRR1) ubiquitin ligase complex, namely the F-box protein GRR1 and the E2 enzyme CDC34, but does not depend on the proteasome. Processing is negatively regulated by the protein phosphatase 2A regulatory subunit RTS1.

It is found in the cell membrane. It localises to the nucleus. Its function is as follows. Transcription factor involved in the regulation of gene expression in response to extracellular amino acid levels. Synthesized as latent cytoplasmic precursor, which, upon a signal initiated by the plasma membrane SPS (SSY1-PTR3-SSY5) amino acid sensor system, becomes proteolytically activated and relocates to the nucleus, where it induces the expression of SPS-sensor-regulated genes, including the amino-acid permeases BAP2 and BAP3. Binding to promoters is facilitated by DAL81. Involved in the repression of genes subject to nitrogen catabolite repression and genes involved in stress response. Negatively regulated by inner nuclear membrane proteins ASI1, ASI2 and ASI3, which prevent unprocessed precursor forms that escape cytoplasmic anchoring from inducing SPS-sensor-regulated genes. The polypeptide is Transcription factor STP2 (STP2) (Saccharomyces cerevisiae (strain ATCC 204508 / S288c) (Baker's yeast)).